The chain runs to 326 residues: Ribose-phosphate pyrophosphokinase 4 (326 aa).

Mg(2+) is bound by residues Asp140, His142, His151, and Asp155.

It belongs to the ribose-phosphate pyrophosphokinase family.

It localises to the cytoplasm. The catalysed reaction is D-ribose 5-phosphate + ATP = 5-phospho-alpha-D-ribose 1-diphosphate + AMP + H(+). The protein operates within metabolic intermediate biosynthesis; 5-phospho-alpha-D-ribose 1-diphosphate biosynthesis; 5-phospho-alpha-D-ribose 1-diphosphate from D-ribose 5-phosphate (route I): step 1/1. Its function is as follows. 5-phosphoribose 1-diphosphate synthase involved in nucleotide, histidine, and tryptophan biosynthesis. Active in heteromultimeric complexes with other 5-phosphoribose 1-diphosphate synthases (PRS2, PRS3, PRS4 and PRS5). This chain is Ribose-phosphate pyrophosphokinase 4 (PRS4), found in Saccharomyces cerevisiae (strain ATCC 204508 / S288c) (Baker's yeast).